A 295-amino-acid polypeptide reads, in one-letter code: Inward rectifier potassium channel Kirbac3.1 (295 aa).

At 1–47 (MTGGMKPPARKPRILNSDGSSNITRLGLEKRGWLDDHYHDLLTVSWP) the chain is on the cytoplasmic side. A helical membrane pass occupies residues 48-69 (VFITLITGLYLVTNALFALAYL). Over 70–82 (ACGDVIENARPGS) the chain is Extracellular. The helical; Pore-forming intramembrane region spans 83–95 (FTDAFFFSVQTMA). The Selectivity filter signature appears at 96–100 (TIGYG). Residues 107–131 (PLANTLVTLEALCGMLGLAVAASLI) traverse the membrane as a helical segment. Residues 132 to 295 (YARFTRPTAG…DLGKFHEIAQ (164 aa)) are Cytoplasmic-facing.

Belongs to the inward rectifier-type potassium channel (TC 1.A.2.1) family. KCNJ11 subfamily. Homotetramer.

The protein resides in the membrane. In terms of biological role, inward rectifier potassium channel that mediates potassium uptake into the cell. Inward rectifier potassium channels are characterized by a greater tendency to allow potassium to flow into the cell rather than out of it. The inward rectification may be achieved by the blockage of outward current by cytoplasmic divalent metal ions and polyamines. Complements an E.coli mutant that is defective in K(+) uptake. This Paramagnetospirillum magnetotacticum (Aquaspirillum magnetotacticum) protein is Inward rectifier potassium channel Kirbac3.1.